The following is a 358-amino-acid chain: Feruloyl CoA ortho-hydroxylase F6H1-1 (358 aa).

Residues 200–308 (TKESLLMGSK…RISVPIFVNP (109 aa)) form the Fe2OG dioxygenase domain. Y216 serves as a coordination point for 2-oxoglutarate. 3 residues coordinate Fe cation: H231, D233, and H289. 2-oxoglutarate-binding residues include R299 and S301.

The protein belongs to the iron/ascorbate-dependent oxidoreductase family. L-ascorbate is required as a cofactor. Requires Fe(2+) as cofactor.

It catalyses the reaction (E)-feruloyl-CoA + 2-oxoglutarate + O2 = (E)-6-hydroxyferuloyl-CoA + succinate + CO2. Its pathway is phenylpropanoid metabolism. In terms of biological role, 2-oxoglutarate (OG)- and Fe(II)-dependent dioxygenase (2OGD) involved in scopoletin biosynthesis. Converts feruloyl CoA into 6'-hydroxyferuloyl CoA. The sequence is that of Feruloyl CoA ortho-hydroxylase F6H1-1 from Ipomoea batatas (Sweet potato).